Reading from the N-terminus, the 119-residue chain is MTRVPRGYIARRRRTKMRSFASNFRGAHLRLNRMITQQVRRAFVSSHRDRGRQKRDFRRLWITRINAATRVYNVFNSYSKLIHNLSKKELILNRKMLAQVAVLNPNNLYTISNKIRTIN.

Belongs to the bacterial ribosomal protein bL20 family.

The protein localises to the plastid. It is found in the chloroplast. Functionally, binds directly to 23S ribosomal RNA and is necessary for the in vitro assembly process of the 50S ribosomal subunit. It is not involved in the protein synthesizing functions of that subunit. This is Large ribosomal subunit protein bL20c from Saccharum hybrid (Sugarcane).